Consider the following 1201-residue polypeptide: Coatomer subunit alpha (1201 aa).

WD repeat units follow at residues 9–39 (SKST…QLWD), 51–81 (DHEG…KVWS), 93–123 (GHLD…RIWN), 135–165 (GHNH…RIWD), 207–237 (GHTR…KLWR), and 251–281 (GHTN…RVWD). Residues 842 to 862 (AVNTTQEQEEPLGEENFNDED) are disordered. The span at 848 to 862 (EQEEPLGEENFNDED) shows a compositional bias: acidic residues.

Oligomeric complex that consists of at least the alpha, beta, beta', gamma, delta, epsilon and zeta subunits. Interacts with the ESCRT-0 subunit VPS27. Interacts with KEI1 (via C-terminal region).

The protein localises to the cytoplasm. Its subcellular location is the golgi apparatus membrane. It localises to the cytoplasmic vesicle. It is found in the COPI-coated vesicle membrane. Its function is as follows. The coatomer is a cytosolic protein complex that binds to dilysine motifs and reversibly associates with Golgi non-clathrin-coated vesicles, which further mediate biosynthetic protein transport from the ER, via the Golgi up to the trans Golgi network. Coatomer complex is required for budding from Golgi membranes, and is essential for the retrograde Golgi-to-ER transport of dilysine-tagged proteins. The chain is Coatomer subunit alpha (COP1) from Saccharomyces cerevisiae (strain ATCC 204508 / S288c) (Baker's yeast).